A 195-amino-acid chain; its full sequence is ATP-dependent Clp protease proteolytic subunit (195 aa).

S99 acts as the Nucleophile in catalysis. Residue H124 is part of the active site.

Belongs to the peptidase S14 family. In terms of assembly, fourteen ClpP subunits assemble into 2 heptameric rings which stack back to back to give a disk-like structure with a central cavity, resembling the structure of eukaryotic proteasomes.

Its subcellular location is the cytoplasm. It carries out the reaction Hydrolysis of proteins to small peptides in the presence of ATP and magnesium. alpha-casein is the usual test substrate. In the absence of ATP, only oligopeptides shorter than five residues are hydrolyzed (such as succinyl-Leu-Tyr-|-NHMec, and Leu-Tyr-Leu-|-Tyr-Trp, in which cleavage of the -Tyr-|-Leu- and -Tyr-|-Trp bonds also occurs).. Functionally, cleaves peptides in various proteins in a process that requires ATP hydrolysis. Has a chymotrypsin-like activity. Plays a major role in the degradation of misfolded proteins. This is ATP-dependent Clp protease proteolytic subunit from Coxiella burnetii (strain CbuG_Q212) (Coxiella burnetii (strain Q212)).